A 515-amino-acid chain; its full sequence is 1-pyrroline-5-carboxylate dehydrogenase (515 aa).

Catalysis depends on residues E286 and C320.

This sequence belongs to the aldehyde dehydrogenase family. RocA subfamily.

It carries out the reaction L-glutamate 5-semialdehyde + NAD(+) + H2O = L-glutamate + NADH + 2 H(+). Its pathway is amino-acid degradation; L-proline degradation into L-glutamate; L-glutamate from L-proline: step 2/2. The protein is 1-pyrroline-5-carboxylate dehydrogenase of Bacillus cytotoxicus (strain DSM 22905 / CIP 110041 / 391-98 / NVH 391-98).